Consider the following 85-residue polypeptide: Toxin Cll5c* (85 aa).

The first 17 residues, 1–17 (MNSLLIITACLVLFVWA), serve as a signal peptide directing secretion. Residues 18-83 (KEGYLVNKST…TYPLPNKSCS (66 aa)) enclose the LCN-type CS-alpha/beta domain. 4 disulfide bridges follow: Cys-29–Cys-82, Cys-33–Cys-58, Cys-42–Cys-63, and Cys-46–Cys-65. Residues 84-85 (KK) constitute a propeptide, removed by a carboxypeptidase.

This sequence belongs to the long (4 C-C) scorpion toxin superfamily. Sodium channel inhibitor family. Beta subfamily. In terms of tissue distribution, expressed by the venom gland.

It localises to the secreted. In terms of biological role, beta toxins bind voltage-independently at site-4 of sodium channels (Nav) and shift the voltage of activation toward more negative potentials thereby affecting sodium channel activation and promoting spontaneous and repetitive firing. The chain is Toxin Cll5c* from Centruroides limpidus (Mexican scorpion).